A 77-amino-acid chain; its full sequence is Conotoxin G11.1 (77 aa).

Residues 1–20 form the signal peptide; the sequence is MKLFLAIVLILMLQFLSTGA. The propeptide occupies 21–45; it reads ETSDNHASRSTTALRDWLLGPKAKR. Intrachain disulfides connect Cys46–Cys60, Cys53–Cys65, Cys59–Cys69, and Cys64–Cys76.

The protein belongs to the conotoxin I3 superfamily. Expressed by the venom duct.

The protein localises to the secreted. Functionally, may embed in the membrane and bind to the voltage sensor domain of a ion channel. Does not induce paralysis when injected in fish, leading to the hypothesis that it may be part of the sedative nirvana cabal. This chain is Conotoxin G11.1, found in Conus geographus (Geography cone).